A 54-amino-acid chain; its full sequence is Ovomucoid (54 aa).

Positions 4-54 (VDCSDYPTHGCTLELKPICGSDNQTYSNKCGFCNAVAQSNGTLTLSHFGKC) constitute a Kazal-like domain. Cystine bridges form between Cys6-Cys36, Cys14-Cys33, and Cys22-Cys54. N-linked (GlcNAc...) asparagine glycosylation occurs at Asn43.

The protein resides in the secreted. The sequence is that of Ovomucoid from Aepypodius arfakianus (Wattled brush turkey).